Consider the following 1406-residue polypeptide: DNA-directed RNA polymerase subunit beta' (1406 aa).

4 residues coordinate Zn(2+): Cys70, Cys72, Cys85, and Cys88. Residues Asp460, Asp462, and Asp464 each coordinate Mg(2+). Positions 814, 888, 895, and 898 each coordinate Zn(2+).

It belongs to the RNA polymerase beta' chain family. The RNAP catalytic core consists of 2 alpha, 1 beta, 1 beta' and 1 omega subunit. When a sigma factor is associated with the core the holoenzyme is formed, which can initiate transcription. The cofactor is Mg(2+). Requires Zn(2+) as cofactor.

The enzyme catalyses RNA(n) + a ribonucleoside 5'-triphosphate = RNA(n+1) + diphosphate. Its function is as follows. DNA-dependent RNA polymerase catalyzes the transcription of DNA into RNA using the four ribonucleoside triphosphates as substrates. The sequence is that of DNA-directed RNA polymerase subunit beta' from Yersinia enterocolitica serotype O:8 / biotype 1B (strain NCTC 13174 / 8081).